The primary structure comprises 112 residues: Small ribosomal subunit protein eS24 (112 aa).

The tract at residues Arg88–Ser112 is disordered.

This sequence belongs to the eukaryotic ribosomal protein eS24 family.

This chain is Small ribosomal subunit protein eS24, found in Methanospirillum hungatei JF-1 (strain ATCC 27890 / DSM 864 / NBRC 100397 / JF-1).